Here is a 113-residue protein sequence, read N- to C-terminus: T cell receptor alpha variable 36/delta variable 7 (113 aa).

An N-terminal signal peptide occupies residues 1–21 (MMKCPQALLAIFWLLLSWVSS). The Ig-like domain occupies 23–113 (DKVVQSPLSL…DSAIYLCAVE (91 aa)). Asn43 and Asn96 each carry an N-linked (GlcNAc...) asparagine glycan. Cys44 and Cys110 are disulfide-bonded.

In terms of assembly, alpha-beta TR is a heterodimer composed of an alpha and beta chain; disulfide-linked. The alpha-beta TR is associated with the transmembrane signaling CD3 coreceptor proteins to form the TR-CD3 (TcR or TCR). The assembly of alpha-beta TR heterodimers with CD3 occurs in the endoplasmic reticulum where a single alpha-beta TR heterodimer associates with one CD3D-CD3E heterodimer, one CD3G-CD3E heterodimer and one CD247 homodimer forming a stable octameric structure. CD3D-CD3E and CD3G-CD3E heterodimers preferentially associate with TR alpha and TR beta chains, respectively. The association of the CD247 homodimer is the last step of TcR assembly in the endoplasmic reticulum and is required for transport to the cell surface.

The protein localises to the cell membrane. In terms of biological role, v region of the variable domain of T cell receptor (TR) alpha chain that participates in the antigen recognition. Alpha-beta T cell receptors are antigen specific receptors which are essential to the immune response and are present on the cell surface of T lymphocytes. Recognize peptide-major histocompatibility (MH) (pMH) complexes that are displayed by antigen presenting cells (APC), a prerequisite for efficient T cell adaptive immunity against pathogens. Binding of alpha-beta TR to pMH complex initiates TR-CD3 clustering on the cell surface and intracellular activation of LCK that phosphorylates the ITAM motifs of CD3G, CD3D, CD3E and CD247 enabling the recruitment of ZAP70. In turn ZAP70 phosphorylates LAT, which recruits numerous signaling molecules to form the LAT signalosome. The LAT signalosome propagates signal branching to three major signaling pathways, the calcium, the mitogen-activated protein kinase (MAPK) kinase and the nuclear factor NF-kappa-B (NF-kB) pathways, leading to the mobilization of transcription factors that are critical for gene expression and essential for T cell growth and differentiation. The T cell repertoire is generated in the thymus, by V-(D)-J rearrangement. This repertoire is then shaped by intrathymic selection events to generate a peripheral T cell pool of self-MH restricted, non-autoaggressive T cells. Post-thymic interaction of alpha-beta TR with the pMH complexes shapes TR structural and functional avidity. In Homo sapiens (Human), this protein is T cell receptor alpha variable 36/delta variable 7.